The sequence spans 494 residues: Maintenance of mitochondrial morphology protein 1 (494 aa).

The Lumenal segment spans residues 1-22 (MSSQPGDPATLPAQSSLSFTQG). A helical membrane pass occupies residues 23-43 (FLLGQLSVVLVLAAFIKFFIF). The Cytoplasmic portion of the chain corresponds to 44–494 (GEAPPPPSRG…GSLPEAVTPG (451 aa)). Disordered regions lie at residues 50–98 (PSRG…SSST), 274–330 (PPLD…KSNV), 398–426 (VRTG…ARHE), and 449–494 (VASR…VTPG). The segment covering 54–64 (LSHRSATHRRS) has biased composition (basic residues). 2 stretches are compositionally biased toward polar residues: residues 65 to 76 (NSIYSNSPQEAG) and 85 to 98 (STSN…SSST). The 258-residue stretch at 130 to 387 (QPESLDWFNV…EPRVQVVGLP (258 aa)) folds into the SMP-LTD domain. The span at 274 to 286 (PPLDTPSHSPSPP) shows a compositional bias: pro residues. Polar residues-rich tracts occupy residues 406–416 (TASNGPRSTVS) and 466–477 (RSMTRQESSGDL).

It belongs to the MMM1 family. As to quaternary structure, homodimer. Component of the ER-mitochondria encounter structure (ERMES) or MDM complex, composed of mmm1, mdm10, mdm12 and mdm34. A mmm1 homodimer associates with one molecule of mdm12 on each side in a pairwise head-to-tail manner, and the SMP-LTD domains of mmm1 and mdm12 generate a continuous hydrophobic tunnel for phospholipid trafficking.

It localises to the endoplasmic reticulum membrane. Its function is as follows. Component of the ERMES/MDM complex, which serves as a molecular tether to connect the endoplasmic reticulum (ER) and mitochondria. Components of this complex are involved in the control of mitochondrial shape and protein biogenesis, and function in nonvesicular lipid trafficking between the ER and mitochondria. The mdm12-mmm1 subcomplex functions in the major beta-barrel assembly pathway that is responsible for biogenesis of all outer membrane beta-barrel proteins, and acts in a late step after the SAM complex. The mdm10-mdm12-mmm1 subcomplex further acts in the TOM40-specific pathway after the action of the mdm12-mmm1 complex. Essential for establishing and maintaining the structure of mitochondria and maintenance of mtDNA nucleoids. The polypeptide is Maintenance of mitochondrial morphology protein 1 (Aspergillus clavatus (strain ATCC 1007 / CBS 513.65 / DSM 816 / NCTC 3887 / NRRL 1 / QM 1276 / 107)).